Reading from the N-terminus, the 104-residue chain is Large ribosomal subunit protein uL24 (104 aa).

This sequence belongs to the universal ribosomal protein uL24 family. Part of the 50S ribosomal subunit.

In terms of biological role, one of two assembly initiator proteins, it binds directly to the 5'-end of the 23S rRNA, where it nucleates assembly of the 50S subunit. Its function is as follows. One of the proteins that surrounds the polypeptide exit tunnel on the outside of the subunit. This Yersinia pseudotuberculosis serotype O:1b (strain IP 31758) protein is Large ribosomal subunit protein uL24.